The sequence spans 179 residues: Adenine phosphoribosyltransferase (179 aa).

This sequence belongs to the purine/pyrimidine phosphoribosyltransferase family. As to quaternary structure, homodimer.

It is found in the cytoplasm. The catalysed reaction is AMP + diphosphate = 5-phospho-alpha-D-ribose 1-diphosphate + adenine. It functions in the pathway purine metabolism; AMP biosynthesis via salvage pathway; AMP from adenine: step 1/1. Functionally, catalyzes a salvage reaction resulting in the formation of AMP, that is energically less costly than de novo synthesis. In Nitrobacter winogradskyi (strain ATCC 25391 / DSM 10237 / CIP 104748 / NCIMB 11846 / Nb-255), this protein is Adenine phosphoribosyltransferase.